Here is a 281-residue protein sequence, read N- to C-terminus: ATP synthase gamma chain (281 aa).

This sequence belongs to the ATPase gamma chain family. In terms of assembly, F-type ATPases have 2 components, CF(1) - the catalytic core - and CF(0) - the membrane proton channel. CF(1) has five subunits: alpha(3), beta(3), gamma(1), delta(1), epsilon(1). CF(0) has three main subunits: a, b and c.

It is found in the cell membrane. Functionally, produces ATP from ADP in the presence of a proton gradient across the membrane. The gamma chain is believed to be important in regulating ATPase activity and the flow of protons through the CF(0) complex. In Desulfitobacterium hafniense (strain DSM 10664 / DCB-2), this protein is ATP synthase gamma chain.